The following is a 911-amino-acid chain: Bifunctional aspartokinase/homoserine dehydrogenase 1, chloroplastic (911 aa).

The N-terminal 82 residues, 1–82, are a transit peptide targeting the chloroplast; sequence MPVVSLAKVV…VENGHLPKGD (82 aa). An aspartokinase region spans residues 83–331; the sequence is SWAVHKFGGT…VSEAVVLKTL (249 aa). The interface stretch occupies residues 332-557; sequence SYQEAWEMSY…LSRTTLAVGI (226 aa). ACT domains lie at 407–482 and 488–565; these read VEGT…IIPN and AVGQ…LIGG. A homoserine dehydrogenase region spans residues 558-911; sequence IGPGLIGGTL…RLAFYLGAPS (354 aa). 2 residues coordinate NAD(+): I563 and T644. NADP(+) contacts are provided by I563, T644, and K668. NADPH is bound by residues I563, T644, and K668. Positions 695, 698, 700, and 702 each coordinate Na(+). Residues G753 and E756 each coordinate NADP(+). E756 and D767 together coordinate L-homoserine. Catalysis depends on K771, which acts as the Proton donor. G888 lines the NAD(+) pocket. An NADP(+)-binding site is contributed by G888. An NADPH-binding site is contributed by G888.

This sequence in the N-terminal section; belongs to the aspartokinase family. In the C-terminal section; belongs to the homoserine dehydrogenase family. In terms of assembly, homo- or heterodimer. Requires a metal cation as cofactor.

The protein resides in the plastid. The protein localises to the chloroplast. It carries out the reaction L-homoserine + NADP(+) = L-aspartate 4-semialdehyde + NADPH + H(+). The enzyme catalyses L-homoserine + NAD(+) = L-aspartate 4-semialdehyde + NADH + H(+). It catalyses the reaction L-aspartate + ATP = 4-phospho-L-aspartate + ADP. It participates in amino-acid biosynthesis; L-lysine biosynthesis via DAP pathway; (S)-tetrahydrodipicolinate from L-aspartate: step 1/4. It functions in the pathway amino-acid biosynthesis; L-methionine biosynthesis via de novo pathway; L-homoserine from L-aspartate: step 1/3. Its pathway is amino-acid biosynthesis; L-methionine biosynthesis via de novo pathway; L-homoserine from L-aspartate: step 3/3. The protein operates within amino-acid biosynthesis; L-threonine biosynthesis; L-threonine from L-aspartate: step 1/5. It participates in amino-acid biosynthesis; L-threonine biosynthesis; L-threonine from L-aspartate: step 3/5. Its activity is regulated as follows. Inhibition of aspartate kinase activity by threonine and leucine and 3-fold activation by cysteine, isoleucine, valine, serine and alanine at 2.5 mM. Partial inhibition of homoserine dehydrogenase activity by threonine and cysteine (14% of activity remaining at saturation with either amino acid). No synergy between the effectors for both activation or inhibition. Bifunctional aspartate kinase and homoserine dehydrogenase that catalyzes the first and the third steps toward the synthesis of lysine, methionine and threonine from aspartate. The polypeptide is Bifunctional aspartokinase/homoserine dehydrogenase 1, chloroplastic (Arabidopsis thaliana (Mouse-ear cress)).